We begin with the raw amino-acid sequence, 428 residues long: Beta-1,3-galactosyl-O-glycosyl-glycoprotein beta-1,6-N-acetylglucosaminyltransferase (428 aa).

The Cytoplasmic portion of the chain corresponds to 1 to 9 (MLRTLLRRR). Residues 5–9 (LLRRR) are mediates interaction with GOLPH3 and is necessary and sufficient for localization to the Golgi. A helical; Signal-anchor for type II membrane protein membrane pass occupies residues 10-32 (LFSYPTKYYFMVLVLSLITFSVL). The tract at residues 33–121 (RIHQKPEFVS…EPLSKEEAEF (89 aa)) is stem region. Residues 33–428 (RIHQKPEFVS…RHKALETLKH (396 aa)) are Lumenal-facing. N58 and N95 each carry an N-linked (GlcNAc...) asparagine glycan. Intrachain disulfides connect C59/C413, C100/C172, C151/C199, and C372/C381. The catalytic stretch occupies residues 122–428 (PIAYSIVVHH…RHKALETLKH (307 aa)). Residues 128 to 130 (VVH), 155 to 157 (DTK), and Y187 contribute to the UDP-N-acetyl-alpha-D-glucosamine site. Positions 243, 251, 254, 320, 341, and 358 each coordinate a glycoprotein. E320 acts as the Nucleophile in catalysis. Residues R378 and K401 each coordinate UDP-N-acetyl-alpha-D-glucosamine.

This sequence belongs to the glycosyltransferase 14 family. As to quaternary structure, interacts with GOLPH3; may control GCNT1 retention in the Golgi. As to expression, highly expressed in activated T-lymphocytes and myeloid cells.

It localises to the golgi apparatus membrane. It carries out the reaction a 3-O-[beta-D-galactosyl-(1-&gt;3)-N-acetyl-alpha-D-galactosaminyl]-L-seryl-[protein] + UDP-N-acetyl-alpha-D-glucosamine = 3-O-{beta-D-galactosyl-(1-&gt;3)-[N-acetyl-beta-D-glucosaminyl-(1-&gt;6)]-N-acetyl-alpha-D-galactosaminyl}-L-seryl-[protein] + UDP + H(+). The enzyme catalyses a 3-O-[beta-D-galactosyl-(1-&gt;3)-N-acetyl-alpha-D-galactosaminyl]-L-threonyl-[protein] + UDP-N-acetyl-alpha-D-glucosamine = a 3-O-{beta-D-galactosyl-(1-&gt;3)-[N-acetyl-beta-D-glucosaminyl-(1-&gt;6)]-N-acetyl-alpha-D-galactosaminyl}-L-threonyl-[protein] + UDP + H(+). The catalysed reaction is a globoside GalGb4Cer + UDP-N-acetyl-alpha-D-glucosamine = a globoside GlcNAc-(beta1-&gt;6)-GalGb4Cer + UDP + H(+). It catalyses the reaction a ganglioside GA1 + UDP-N-acetyl-alpha-D-glucosamine = a ganglioside beta-D-GlcNAc-(1-&gt;6)-GA1 + UDP + H(+). It participates in protein modification; protein glycosylation. Its pathway is glycolipid biosynthesis. Functionally, glycosyltransferase that catalyzes the transfer of an N-acetylglucosamine (GlcNAc) moiety in beta1-6 linkage from UDP-GlcNAc onto mucin-type core 1 O-glycan to form the branched mucin-type core 2 O-glycan. The catalysis is metal ion-independent and occurs with inversion of the anomeric configuration of sugar donor. Selectively involved in synthesis of mucin-type core 2 O-glycans that serve as scaffolds for the display of selectin ligand sialyl Lewis X epitope by myeloid cells, with an impact on homeostasis and recruitment to inflammatory sites. Can also act on glycolipid substrates. Transfers GlcNAc moiety to GalGb4Cer globosides in a reaction step to the synthesis of stage-specific embryonic antigen 1 (SSEA-1) determinant. Can use Galbeta1-3GalNAcalpha1- and Galbeta1-3GalNAcbeta1- oligosaccharide derivatives as acceptor substrates. The polypeptide is Beta-1,3-galactosyl-O-glycosyl-glycoprotein beta-1,6-N-acetylglucosaminyltransferase (GCNT1) (Homo sapiens (Human)).